A 1240-amino-acid polypeptide reads, in one-letter code: Ubiquitin carboxyl-terminal hydrolase 36 (1240 aa).

Disordered stretches follow at residues 37–56 (AKTS…STDN) and 100–144 (SNGG…GTSA). Low complexity-rich tracts occupy residues 47-56 (SSTSGSSTDN) and 101-132 (NGGA…DNNG). The region spanning 202 to 512 (TGMLNVGNTC…NAYIMFYELD (311 aa)) is the USP domain. The active-site Nucleophile is the cysteine 211. Histidine 471 functions as the Proton acceptor in the catalytic mechanism. Residues 637-705 (ANKSSCNTLN…KMFEESSESV (69 aa)) form a disordered region. The span at 639–649 (KSSCNTLNNSK) shows a compositional bias: polar residues. Low complexity predominate over residues 650 to 662 (QHQPQQQQQQPQH). A compositionally biased stretch (acidic residues) spans 668–680 (SDEEEDSDDDNDN). At threonine 715 the chain carries Phosphothreonine. Disordered stretches follow at residues 723–818 (YESA…KQKT), 831–998 (YKNK…GESL), 1076–1163 (DMSS…EYES), and 1198–1240 (RFAG…QQQS). 2 positions are modified to phosphoserine: serine 725 and serine 727. Over residues 733-744 (QQQQQQQTLQQQ) the composition is skewed to low complexity. Residues 759–769 (SDTDDDDDEEQ) show a composition bias toward acidic residues. Positions 794–815 (NSSSSKTKSASNASSANVNSSK) are enriched in low complexity. Residues 843 to 859 (DDDDDDDEDEDEDEDEA) show a composition bias toward acidic residues. A compositionally biased stretch (low complexity) spans 869-879 (TKSSSSSSSTS). Residues 880–890 (LTNGWQQSQNG) are compositionally biased toward polar residues. Phosphoserine is present on serine 895. Phosphothreonine is present on threonine 898. Serine 901 is subject to Phosphoserine. Positions 918 to 941 (DEDDDENVDGVADADDDDDNDEVA) are enriched in acidic residues. A compositionally biased stretch (polar residues) spans 976–988 (LNGSSKSQQTTPR). A compositionally biased stretch (low complexity) spans 1076–1103 (DMSSSSSSSSSTNSSSNSSSRSNGNSSN). A compositionally biased stretch (basic and acidic residues) spans 1111–1120 (AEAREQRKRD). Low complexity predominate over residues 1231–1240 (QSSGQQQQQS).

It belongs to the peptidase C19 family. As to quaternary structure, interacts with atms/PAF1, but not with CycT.

The protein localises to the nucleus. Its subcellular location is the nucleolus. The enzyme catalyses Thiol-dependent hydrolysis of ester, thioester, amide, peptide and isopeptide bonds formed by the C-terminal Gly of ubiquitin (a 76-residue protein attached to proteins as an intracellular targeting signal).. Its function is as follows. Required for maintaining multiple types of adult stem cells, including male and female germline, epithelial follicle cell and intestinal stem cells. May function as a transcriptional repressor by continually deubiquiting histone H2B at the promoters of genes critical for cellular differentiation, thereby preventing histone H3 'Lys-4' trimethylation (H3K4). Controls selective autophagy activation by ubiquitinated proteins. The sequence is that of Ubiquitin carboxyl-terminal hydrolase 36 (Usp36) from Drosophila grimshawi (Hawaiian fruit fly).